A 378-amino-acid polypeptide reads, in one-letter code: tRNA N(3)-cytidine methyltransferase METTL2 (378 aa).

S-adenosyl-L-methionine contacts are provided by W78, Y82, G188, D213, D239, L240, and I260.

This sequence belongs to the methyltransferase superfamily. METL family. Monomer. Interacts with DALRD3.

It is found in the cytoplasm. It carries out the reaction cytidine(32) in tRNA(Thr) + S-adenosyl-L-methionine = N(3)-methylcytidine(32) in tRNA(Thr) + S-adenosyl-L-homocysteine + H(+). The enzyme catalyses cytidine(32) in tRNA(Arg)(CCU) + S-adenosyl-L-methionine = N(3)-methylcytidine(32) in tRNA(Arg)(CCU) + S-adenosyl-L-homocysteine + H(+). In terms of biological role, S-adenosyl-L-methionine-dependent methyltransferase that mediates N(3)-methylcytidine modification of residue 32 of the tRNA anticodon loop of tRNA(Thr)(UGU) and tRNA(Arg)(CCU). N(3)-methylcytidine methylation by METTL2 requires the N6-threonylcarbamoylation of tRNA (t6A37) by the EKC/KEOPS complex as prerequisite. This Bos taurus (Bovine) protein is tRNA N(3)-cytidine methyltransferase METTL2 (METTL2).